The following is a 561-amino-acid chain: Arginine--tRNA ligase (561 aa).

Residues 108–118 (PNVAKEMHVGH) carry the 'HIGH' region motif.

Belongs to the class-I aminoacyl-tRNA synthetase family. As to quaternary structure, monomer.

The protein localises to the cytoplasm. The catalysed reaction is tRNA(Arg) + L-arginine + ATP = L-arginyl-tRNA(Arg) + AMP + diphosphate. This is Arginine--tRNA ligase from Haemophilus ducreyi (strain 35000HP / ATCC 700724).